A 79-amino-acid polypeptide reads, in one-letter code: DNA-directed RNA polymerase subunit omega (79 aa).

This sequence belongs to the RNA polymerase subunit omega family. As to quaternary structure, in cyanobacteria the RNAP catalytic core is composed of 2 alpha, 1 beta, 1 beta', 1 gamma and 1 omega subunit. When a sigma factor is associated with the core the holoenzyme is formed, which can initiate transcription.

The enzyme catalyses RNA(n) + a ribonucleoside 5'-triphosphate = RNA(n+1) + diphosphate. Its function is as follows. Promotes RNA polymerase assembly. Latches the N- and C-terminal regions of the beta' subunit thereby facilitating its interaction with the beta and alpha subunits. The sequence is that of DNA-directed RNA polymerase subunit omega from Synechococcus sp. (strain JA-2-3B'a(2-13)) (Cyanobacteria bacterium Yellowstone B-Prime).